A 534-amino-acid polypeptide reads, in one-letter code: DM7 family protein GE17491 (534 aa).

The protein belongs to the DM7 family.

The sequence is that of DM7 family protein GE17491 from Drosophila yakuba (Fruit fly).